Here is a 354-residue protein sequence, read N- to C-terminus: Guanine nucleotide-binding protein alpha-3 subunit (354 aa).

Residue Gly-2 is the site of N-myristoyl glycine attachment. Residue Cys-4 is the site of S-palmitoyl cysteine attachment. Residues 32-354 (KVVKLLLLGA…QANLQGCGLY (323 aa)) enclose the G-alpha domain. Residues 35–48 (KLLLLGAGECGKST) are G1 motif. GTP contacts are provided by residues 40-47 (GAGECGKS), 176-182 (LLSRIKT), 201-205 (DVGGQ), 270-273 (NKKD), and Ala-326. Ser-47 and Thr-182 together coordinate Mg(2+). The interval 174–182 (DILLSRIKT) is G2 motif. Positions 197 to 206 (FRVFDVGGQR) are G3 motif. The G4 motif stretch occupies residues 266-273 (ILFLNKKD). The G5 motif stretch occupies residues 324 to 329 (TCATDT).

It belongs to the G-alpha family. G(q) subfamily. As to quaternary structure, g proteins are composed of 3 units; alpha, beta and gamma. The alpha chain contains the guanine nucleotide binding site.

In terms of biological role, guanine nucleotide-binding proteins (G proteins) are involved as modulators or transducers in various transmembrane signaling systems. Promotes transcription of 3',5'-cyclic phosphodiesterases pde-1 and pde-5, leading to reduced cGMP levels in sensory neurons. This causes suppression of insulin production and signaling which leads to increased daf-16 activity and contributes to increased adult lifespan and resistance to oxidative stress. In addition, by reducing cGMP levels, inhibits TGF-beta signaling pathways. Involved in behavioral response to P.aeruginosa by controlling the expression of daf-7, a member of the TGF-beta family, in ASJ sensory neurons. In Caenorhabditis briggsae, this protein is Guanine nucleotide-binding protein alpha-3 subunit (gpa-3).